The chain runs to 247 residues: Cementoblastoma-derived protein 1 (247 aa).

Positions 1–28 are enriched in polar residues; it reads MGTSSTDSQQAGHRRCSTSNTSAENLTC. Disordered stretches follow at residues 1-52 and 147-183; these read MGTS…AGQP and EENS…EKVK.

In terms of processing, phosphorylated. N-glycosylated. Expressed by cementoblasts, a subpopulation of periodontal ligament cells and cells located around vessels in periodontium (at protein level).

The protein localises to the cytoplasm. It is found in the nucleus. Functionally, may play a role in development of the periodontium which surrounds and supports the teeth by promoting the differentiation of multi-potent cells from the periodontal ligament into cementoblasts to form the cementum. Binds hydroxyapatite and may promote the biomineralization of the cementum. Also promotes cell proliferation. In Homo sapiens (Human), this protein is Cementoblastoma-derived protein 1.